Consider the following 170-residue polypeptide: CFA/I fimbrial subunit B (170 aa).

The first 23 residues, 1-23, serve as a signal peptide directing secretion; it reads MKFKKTIGAMALTTMFVAVSASA.

Belongs to the fimbrial CS1 protein family. As to quaternary structure, CFA/I fimbriae are rather rigid, thread-like filaments of 0.5-1 micrometer, with an apparent axial hole, and a diameter of 7 nanometers. A single CFA/I fimbria consists of about 100 identical protein subunits.

It is found in the fimbrium. Its function is as follows. Fimbriae (also called pili), polar filaments radiating from the surface of the bacterium to a length of 0.5-1.5 micrometers and numbering 100-300 per cell, enable bacteria to colonize the epithelium of specific host organs. The chain is CFA/I fimbrial subunit B (cfaB) from Escherichia coli.